Here is a 628-residue protein sequence, read N- to C-terminus: MKWNFMMSHGHQQGRMAITLAALGVVYGDLGTSPLYALKESFAGHLGLQPTPEGILSIVSLFFWTIMIVVSFKYVLLVLRADDKGEGGILTLASLASRRLPAKPRALLMLLGLVGVGLFIGDAVITPAISVLSAVEGLQVITPELAPFVLPITLTVLVILFGAQHYGTAGIGRLFGPIMLLWFGVLAALGAYEIVQNPAILQAVNPLYALDFMVSRPGIAFITLGAVVLCVTGTEALYADMGHFGRGAIQLAWGSLVMPALLLNYFGQGALLLRNPAAIENPFYLLAPSWLAFPLLILATLATVIASQAVISGTYSVVRQAILLGYLPRQEIRHTSEHEIGQIYLPLVNWLLLGGIIIVIIWFQSSSNLAAAYGIAVTGTMALTTLLLMVVAARRWKWSRWLIALICAPLLLVDVTFFAANTTKFLAGGWLPILFALLAIIVMTTWKRGRELVLDKLEHKSLALKGFVDNMQAHPPLQVPGTAVFLSKSVQVVPHAMLHNLKHNKILHERVIFLTVQIKDEPWLSFKERIELTHLGEGFWQVVAHFGYKEVPSMEEIFQACAQEDLKVTMAKTSFFLSHENLVSTDLPGMARWREGLFVWMNRNSLKATDFFHIPANRVVELGVLLEL.

12 helical membrane passes run isoleucine 18–leucine 38, isoleucine 58–valine 78, alanine 106–threonine 126, isoleucine 141–phenylalanine 161, phenylalanine 175–valine 195, isoleucine 219–alanine 239, tryptophan 253–leucine 273, leucine 285–isoleucine 305, isoleucine 343–phenylalanine 363, alanine 371–valine 391, tryptophan 401–asparagine 421, and phenylalanine 425–threonine 445.

This sequence belongs to the HAK/KUP transporter (TC 2.A.72) family.

It localises to the cell inner membrane. It catalyses the reaction K(+)(in) + H(+)(in) = K(+)(out) + H(+)(out). Transport of potassium into the cell. Likely operates as a K(+):H(+) symporter. This Aeromonas hydrophila subsp. hydrophila (strain ATCC 7966 / DSM 30187 / BCRC 13018 / CCUG 14551 / JCM 1027 / KCTC 2358 / NCIMB 9240 / NCTC 8049) protein is Probable potassium transport system protein Kup 1.